Reading from the N-terminus, the 742-residue chain is Serine/threonine-protein kinase SKY1 (742 aa).

Residues lysine 13–proline 146 are disordered. The span at aspartate 19–glutamine 35 shows a compositional bias: polar residues. The segment covering threonine 56–alanine 73 has biased composition (low complexity). Over residues threonine 81–valine 101 the composition is skewed to basic and acidic residues. Residues serine 106–serine 127 are compositionally biased toward low complexity. Positions cysteine 128 to arginine 140 are enriched in basic and acidic residues. The Protein kinase domain occupies tyrosine 158–leucine 706. ATP-binding positions include leucine 164–valine 172 and lysine 187. Catalysis depends on aspartate 294, which acts as the Proton acceptor. Residues threonine 383 and threonine 386 each carry the phosphothreonine modification. Serine 388, serine 393, serine 410, serine 427, serine 432, serine 445, serine 449, and serine 453 each carry phosphoserine. The disordered stretch occupies residues isoleucine 459 to methionine 491. Residues aspartate 465 to aspartate 489 show a composition bias toward low complexity.

It belongs to the protein kinase superfamily. Ser/Thr protein kinase family.

It carries out the reaction L-seryl-[protein] + ATP = O-phospho-L-seryl-[protein] + ADP + H(+). The enzyme catalyses L-threonyl-[protein] + ATP = O-phospho-L-threonyl-[protein] + ADP + H(+). In terms of biological role, constitutively active kinase, specifically and sequentially phosphorylates serine/arginine (SR)-type shuttling mRNA binding proteins in their RS dipeptide repeats. This chain is Serine/threonine-protein kinase SKY1 (SKY1), found in Saccharomyces cerevisiae (strain ATCC 204508 / S288c) (Baker's yeast).